Reading from the N-terminus, the 239-residue chain is Large ribosomal subunit protein uL2 (239 aa).

The tract at residues 200–239 is disordered; that stretch reads VNHPHGGKEHHIGRPSTVSRRAPPGRKVGHIAARRTGRRK. Residues 222–239 show a composition bias toward basic residues; the sequence is PPGRKVGHIAARRTGRRK.

Belongs to the universal ribosomal protein uL2 family. Part of the 50S ribosomal subunit. Forms a bridge to the 30S subunit in the 70S ribosome.

Its function is as follows. One of the primary rRNA binding proteins. Required for association of the 30S and 50S subunits to form the 70S ribosome, for tRNA binding and peptide bond formation. It has been suggested to have peptidyltransferase activity; this is somewhat controversial. Makes several contacts with the 16S rRNA in the 70S ribosome. This chain is Large ribosomal subunit protein uL2, found in Thermococcus kodakarensis (strain ATCC BAA-918 / JCM 12380 / KOD1) (Pyrococcus kodakaraensis (strain KOD1)).